The primary structure comprises 370 residues: 3-dehydroquinate synthase (370 aa).

Residues 70–75 (DAEDGK), 104–108 (GAATD), 128–129 (TT), Lys141, Lys150, and 168–171 (TLET) contribute to the NAD(+) site. Zn(2+) contacts are provided by Glu183, His246, and His262.

Belongs to the sugar phosphate cyclases superfamily. Dehydroquinate synthase family. The cofactor is Co(2+). Zn(2+) is required as a cofactor. NAD(+) serves as cofactor.

The protein localises to the cytoplasm. It carries out the reaction 7-phospho-2-dehydro-3-deoxy-D-arabino-heptonate = 3-dehydroquinate + phosphate. It functions in the pathway metabolic intermediate biosynthesis; chorismate biosynthesis; chorismate from D-erythrose 4-phosphate and phosphoenolpyruvate: step 2/7. Functionally, catalyzes the conversion of 3-deoxy-D-arabino-heptulosonate 7-phosphate (DAHP) to dehydroquinate (DHQ). In Rhodococcus opacus (strain B4), this protein is 3-dehydroquinate synthase.